Reading from the N-terminus, the 184-residue chain is MRKIKDIEKGLLTDCRQIQSPHFDKRPNPQDISLLVIHYISLPPEQFGGGYVDDFFQGKLDPKIHPYFAEIYQMRVSAHCLIERNGRITQYVNFNDRAWHAGVSNFQGREKCNDFAIGIELEGSNEQPFTDAQYFSLQELTNVIMKSYPKITKDRIVGHCDISPKRKIDPGQYFDWERYLSSVK.

An N-acetylmuramoyl-L-alanine amidase domain is found at 30 to 171 (QDISLLVIHY…ISPKRKIDPG (142 aa)). Zn(2+) is bound at residue H38. E120 (proton acceptor) is an active-site residue. Positions 159 and 169 each coordinate Zn(2+).

It belongs to the N-acetylmuramoyl-L-alanine amidase 2 family. Requires Zn(2+) as cofactor.

It localises to the cytoplasm. The catalysed reaction is Hydrolyzes the link between N-acetylmuramoyl residues and L-amino acid residues in certain cell-wall glycopeptides.. In terms of biological role, involved in cell wall peptidoglycan recycling. Specifically cleaves the amide bond between the lactyl group of N-acetylmuramic acid and the alpha-amino group of the L-alanine in degradation products containing an anhydro N-acetylmuramyl moiety. This chain is 1,6-anhydro-N-acetylmuramyl-L-alanine amidase AmpD (ampD), found in Haemophilus influenzae (strain ATCC 51907 / DSM 11121 / KW20 / Rd).